The sequence spans 476 residues: Alkaline phosphatase H (476 aa).

The signal sequence occupies residues 1–26 (MTPGYPLALSLAVSMAVLGSALPAQA). Asp-77 is a Mg(2+) binding site. Asp-77 contributes to the Zn(2+) binding site. Ser-128 functions as the Phosphoserine intermediate in the catalytic mechanism. Ser-128 carries the phosphoserine modification. Residues Asp-179 and Thr-181 each contribute to the Mg(2+) site. Ser-206 bears the Phosphoserine mark. Gln-346 is a binding site for Mg(2+). Zn(2+) is bound by residues Asp-353, His-357, Asp-395, His-396, and His-438.

This sequence belongs to the alkaline phosphatase family. The cofactor is Mg(2+). It depends on Zn(2+) as a cofactor.

The protein localises to the secreted. It localises to the periplasm. It catalyses the reaction a phosphate monoester + H2O = an alcohol + phosphate. Has only phosphomonoesterase activity. The sequence is that of Alkaline phosphatase H (phoA) from Pseudomonas aeruginosa (strain UCBPP-PA14).